The following is a 71-amino-acid chain: uncharacterized protein (71 aa).

The tract at residues 1 to 71 (MLFETLKSLS…AFFSRPFYSE (71 aa)) is disordered. Residues 7–33 (KSLSQQNGGQFSDEQSFESPISSSFNG) are compositionally biased toward polar residues. The segment covering 35–65 (SMPFGSPSSTMSSSYKGNTNSSTKSSSAFFS) has biased composition (low complexity).

This is an uncharacterized protein from Dictyostelium discoideum (Social amoeba).